Here is a 408-residue protein sequence, read N- to C-terminus: Succinylornithine transaminase (408 aa).

Lys-252 bears the N6-(pyridoxal phosphate)lysine mark.

It belongs to the class-III pyridoxal-phosphate-dependent aminotransferase family. AstC subfamily. Requires pyridoxal 5'-phosphate as cofactor.

It carries out the reaction N(2)-succinyl-L-ornithine + 2-oxoglutarate = N-succinyl-L-glutamate 5-semialdehyde + L-glutamate. It participates in amino-acid degradation; L-arginine degradation via AST pathway; L-glutamate and succinate from L-arginine: step 3/5. Its function is as follows. Catalyzes the transamination of N(2)-succinylornithine and alpha-ketoglutarate into N(2)-succinylglutamate semialdehyde and glutamate. Can also act as an acetylornithine aminotransferase. The chain is Succinylornithine transaminase from Salmonella enteritidis PT4 (strain P125109).